The sequence spans 158 residues: Disease resistance response protein Pi49 (158 aa).

Belongs to the BetVI family.

The protein is Disease resistance response protein Pi49 (DRR49A) of Pisum sativum (Garden pea).